The following is a 436-amino-acid chain: Carboxypeptidase A5 (436 aa).

Positions 1–33 are cleaved as a signal peptide; the sequence is MQGTPAGGTSPGPSPMDRQTLLVFSLILAAALG. Positions 34-126 are cleaved as a propeptide — activation peptide; the sequence is QMNFTGDQVL…EREAMAKSRR (93 aa). Residues 138–431 enclose the Peptidase M14 domain; that stretch reads SYHTLEEISS…MALRTIMEHT (294 aa). Residues H196 and E199 each contribute to the Zn(2+) site. Substrate is bound by residues 196 to 199, R254, and 271 to 272; these read HSRE and NR. C265 and C288 are disulfide-bonded. H323 serves as a coordination point for Zn(2+). Residues 324–325 and Y375 contribute to the substrate site; that span reads SY. The active-site Proton donor/acceptor is E397.

The protein belongs to the peptidase M14 family. Zn(2+) serves as cofactor.

The protein resides in the secreted. The sequence is that of Carboxypeptidase A5 (CPA5) from Macaca fascicularis (Crab-eating macaque).